Consider the following 308-residue polypeptide: Neurexophilin-4 (308 aa).

Residues 1-23 form the signal peptide; that stretch reads MRLLPEWFLLLFGPWLLRKAVSA. The II stretch occupies residues 24–84; it reads QIPESGRPQY…GALARAGAAG (61 aa). Residues 40–51 are compositionally biased toward low complexity; it reads AAGAGAPGQQLP. The disordered stretch occupies residues 40-59; sequence AAGAGAPGQQLPEPRSSDGL. Residues Asn-72, Asn-133, Asn-143, and Asn-149 are each glycosylated (N-linked (GlcNAc...) asparagine). An III region spans residues 85 to 163; the sequence is ALPAQRTKRK…IVPPSKRVEF (79 aa). The tract at residues 164-224 is IV (linker domain); the sequence is GGVWLPGPVP…PLGGALGVPG (61 aa). Residues 225–308 form a v (Cys-rich) region; the sequence is AKESRAFNCH…NFQSEHPYFG (84 aa).

Belongs to the neurexophilin family. May be proteolytically processed at the boundary between the N-terminal non-conserved and the central conserved domain in neuron-like cells. In terms of tissue distribution, expressed in brain, spleen, and testis.

Its subcellular location is the secreted. In terms of biological role, may be signaling molecules that resemble neuropeptides and that act by binding to alpha-neurexins and possibly other receptors. This chain is Neurexophilin-4 (NXPH4), found in Homo sapiens (Human).